The following is a 90-amino-acid chain: Probable Fe(2+)-trafficking protein (90 aa).

It belongs to the Fe(2+)-trafficking protein family.

Could be a mediator in iron transactions between iron acquisition and iron-requiring processes, such as synthesis and/or repair of Fe-S clusters in biosynthetic enzymes. The polypeptide is Probable Fe(2+)-trafficking protein (Azoarcus sp. (strain BH72)).